Consider the following 350-residue polypeptide: Biotin synthase (350 aa).

The 225-residue stretch at 54–278 (REIQLSTLLS…TMPQSYVRLS (225 aa)) folds into the Radical SAM core domain. 3 residues coordinate [4Fe-4S] cluster: C69, C73, and C76. [2Fe-2S] cluster is bound by residues C113, C144, C204, and R276.

It belongs to the radical SAM superfamily. Biotin synthase family. As to quaternary structure, homodimer. It depends on [4Fe-4S] cluster as a cofactor. [2Fe-2S] cluster is required as a cofactor.

It catalyses the reaction (4R,5S)-dethiobiotin + (sulfur carrier)-SH + 2 reduced [2Fe-2S]-[ferredoxin] + 2 S-adenosyl-L-methionine = (sulfur carrier)-H + biotin + 2 5'-deoxyadenosine + 2 L-methionine + 2 oxidized [2Fe-2S]-[ferredoxin]. The protein operates within cofactor biosynthesis; biotin biosynthesis; biotin from 7,8-diaminononanoate: step 2/2. Catalyzes the conversion of dethiobiotin (DTB) to biotin by the insertion of a sulfur atom into dethiobiotin via a radical-based mechanism. In Neisseria meningitidis serogroup C / serotype 2a (strain ATCC 700532 / DSM 15464 / FAM18), this protein is Biotin synthase.